A 535-amino-acid polypeptide reads, in one-letter code: CTP synthase (535 aa).

An amidoligase domain region spans residues methionine 1–leucine 267. Residue serine 13 coordinates CTP. Residue serine 13 coordinates UTP. Serine 14–isoleucine 19 contacts ATP. Tyrosine 54 serves as a coordination point for L-glutamine. Residue aspartate 71 participates in ATP binding. 2 residues coordinate Mg(2+): aspartate 71 and glutamate 141. CTP is bound by residues aspartate 148 to glutamate 150, lysine 188 to glutamine 193, and lysine 224. UTP-binding positions include lysine 188 to glutamine 193 and lysine 224. Residues arginine 292–serine 534 enclose the Glutamine amidotransferase type-1 domain. Glycine 354 serves as a coordination point for L-glutamine. The active-site Nucleophile; for glutamine hydrolysis is the cysteine 381. Residues leucine 382–glutamine 385, glutamate 405, and arginine 462 contribute to the L-glutamine site. Active-site residues include histidine 507 and glutamate 509.

It belongs to the CTP synthase family. As to quaternary structure, homotetramer.

The enzyme catalyses UTP + L-glutamine + ATP + H2O = CTP + L-glutamate + ADP + phosphate + 2 H(+). The catalysed reaction is L-glutamine + H2O = L-glutamate + NH4(+). It carries out the reaction UTP + NH4(+) + ATP = CTP + ADP + phosphate + 2 H(+). The protein operates within pyrimidine metabolism; CTP biosynthesis via de novo pathway; CTP from UDP: step 2/2. Allosterically activated by GTP, when glutamine is the substrate; GTP has no effect on the reaction when ammonia is the substrate. The allosteric effector GTP functions by stabilizing the protein conformation that binds the tetrahedral intermediate(s) formed during glutamine hydrolysis. Inhibited by the product CTP, via allosteric rather than competitive inhibition. Its function is as follows. Catalyzes the ATP-dependent amination of UTP to CTP with either L-glutamine or ammonia as the source of nitrogen. Regulates intracellular CTP levels through interactions with the four ribonucleotide triphosphates. This Bacillus cytotoxicus (strain DSM 22905 / CIP 110041 / 391-98 / NVH 391-98) protein is CTP synthase.